The sequence spans 67 residues: Large ribosomal subunit protein uL29 (67 aa).

The protein belongs to the universal ribosomal protein uL29 family.

This Methanosarcina mazei (strain ATCC BAA-159 / DSM 3647 / Goe1 / Go1 / JCM 11833 / OCM 88) (Methanosarcina frisia) protein is Large ribosomal subunit protein uL29.